The sequence spans 31 residues: Zinc metalloproteinase alsophinase (31 aa).

Position 1 is a pyrrolidone carboxylic acid (Gln1). The region spanning 9–31 (KYIEFYLVVDNGMFXKYSXXFTV) is the Peptidase M12B domain. Glu12 contacts Ca(2+).

Monomer. Zn(2+) is required as a cofactor. Post-translationally, contains 9 disulfide bonds. As to expression, expressed by the venom gland.

The protein resides in the secreted. Its activity is regulated as follows. Inhibited by 1,10-phenanthroline. Functionally, snake venom zinc metalloprotease that has potent hemorrhagic activity, fibrinogenolytic activity on the alpha-subunit of human fibrinogen (FGA) in vitro and provokes necrosis in skin, muscle and lung tissues. May contribute to local edema and ecchymosis induced by venom. Hydrolyzes model substrate (beta-chain of insulin) at Ala(14)-Leu(15). The protein is Zinc metalloproteinase alsophinase of Borikenophis portoricensis (Puerto Rican racer).